Here is a 706-residue protein sequence, read N- to C-terminus: Probable protein S-acyltransferase 20 (706 aa).

2 consecutive transmembrane segments (helical) span residues 16 to 36 (VIAITVFCLLVVAFYAFFAPF) and 41 to 61 (IWEYVLIGVYSPVAILVFVLY). A DHHC domain is found at 172–222 (LFCTLCNCEVRKFSKHCRSCDKCVDCFDHHCKWLNNCVGRKNYVTFVSLMS). Cysteine 202 (S-palmitoyl cysteine intermediate) is an active-site residue. 2 consecutive transmembrane segments (helical) span residues 220 to 240 (LMSASLLWLIIEAAVGIAVIV) and 275 to 295 (AVAIFACFPLGELLFFHMLLI). Disordered stretches follow at residues 470–505 (SSLSRNSFAPSQGSRDEYDTGSHGMSNLSSPSHVHE), 591–621 (LNPSSQTASTQNPRPILPAHDSSSGSSALRD), and 680–706 (RDSTSNQLPVFAPGGLGANSQTGSNIK). Composition is skewed to polar residues over residues 492–501 (HGMSNLSSPS), 591–603 (LNPSSQTASTQNP), and 697–706 (ANSQTGSNIK).

It belongs to the DHHC palmitoyltransferase family.

It is found in the cell membrane. The protein resides in the cytoplasmic vesicle membrane. It carries out the reaction L-cysteinyl-[protein] + hexadecanoyl-CoA = S-hexadecanoyl-L-cysteinyl-[protein] + CoA. Palmitoyl acyltransferase. The chain is Probable protein S-acyltransferase 20 (PAT20) from Arabidopsis thaliana (Mouse-ear cress).